The primary structure comprises 259 residues: Dihydroorotate dehydrogenase B (NAD(+)), electron transfer subunit (259 aa).

In terms of domain architecture, FAD-binding FR-type spans Met-2–Val-102. Residues Arg-53–Ser-56, Leu-70–Arg-72, and Gly-77–Thr-78 contribute to the FAD site. Residues Cys-221, Cys-226, Cys-229, and Cys-246 each contribute to the [2Fe-2S] cluster site.

The protein belongs to the PyrK family. Heterotetramer of 2 PyrK and 2 PyrD type B subunits. It depends on [2Fe-2S] cluster as a cofactor. The cofactor is FAD.

The protein operates within pyrimidine metabolism; UMP biosynthesis via de novo pathway; orotate from (S)-dihydroorotate (NAD(+) route): step 1/1. In terms of biological role, responsible for channeling the electrons from the oxidation of dihydroorotate from the FMN redox center in the PyrD type B subunit to the ultimate electron acceptor NAD(+). The polypeptide is Dihydroorotate dehydrogenase B (NAD(+)), electron transfer subunit (Bacillus cereus (strain Q1)).